The sequence spans 434 residues: Glutamyl-tRNA reductase (434 aa).

Substrate-binding positions include 49–52 (TCNR), S109, 114–116 (EPQ), and Q120. The active-site Nucleophile is the C50. Residue 189-194 (GAGEMC) coordinates NADP(+).

The protein belongs to the glutamyl-tRNA reductase family. In terms of assembly, homodimer.

It carries out the reaction (S)-4-amino-5-oxopentanoate + tRNA(Glu) + NADP(+) = L-glutamyl-tRNA(Glu) + NADPH + H(+). The protein operates within porphyrin-containing compound metabolism; protoporphyrin-IX biosynthesis; 5-aminolevulinate from L-glutamyl-tRNA(Glu): step 1/2. Its function is as follows. Catalyzes the NADPH-dependent reduction of glutamyl-tRNA(Glu) to glutamate 1-semialdehyde (GSA). This Geobacter sulfurreducens (strain ATCC 51573 / DSM 12127 / PCA) protein is Glutamyl-tRNA reductase.